The following is a 277-amino-acid chain: 3-methyl-2-oxobutanoate hydroxymethyltransferase (277 aa).

Mg(2+) is bound by residues aspartate 58 and aspartate 97. 3-methyl-2-oxobutanoate-binding positions include 58–59, aspartate 97, and lysine 127; that span reads DS. Glutamate 129 is a Mg(2+) binding site. The Proton acceptor role is filled by glutamate 195.

The protein belongs to the PanB family. In terms of assembly, homodecamer; pentamer of dimers. Mg(2+) is required as a cofactor.

Its subcellular location is the cytoplasm. It catalyses the reaction 3-methyl-2-oxobutanoate + (6R)-5,10-methylene-5,6,7,8-tetrahydrofolate + H2O = 2-dehydropantoate + (6S)-5,6,7,8-tetrahydrofolate. The protein operates within cofactor biosynthesis; (R)-pantothenate biosynthesis; (R)-pantoate from 3-methyl-2-oxobutanoate: step 1/2. Its function is as follows. Catalyzes the reversible reaction in which hydroxymethyl group from 5,10-methylenetetrahydrofolate is transferred onto alpha-ketoisovalerate to form ketopantoate. The protein is 3-methyl-2-oxobutanoate hydroxymethyltransferase of Leifsonia xyli subsp. xyli (strain CTCB07).